The chain runs to 348 residues: Peptidyl-Lys metalloendopeptidase (348 aa).

Positions 1 to 18 (MFSSVMVALVSLAVAVSA) are cleaved as a signal peptide. The propeptide occupies 19-181 (NPGLSLKVSG…RATPTLTRPV (163 aa)). Disulfide bonds link Cys186-Cys256 and Cys258-Cys278. Thr223 is a glycosylation site (O-linked (Man) threonine; partial). A Zn(2+)-binding site is contributed by His298. The active site involves Glu299. 2 residues coordinate Zn(2+): His302 and Asp311.

Zn(2+) is required as a cofactor.

It is found in the secreted. It catalyses the reaction Preferential cleavage in proteins: -Xaa-|-Lys- (in which Xaa may be Pro).. With respect to regulation, inhibited by chelating agents such as EDTA and 1,10-phenanthroline. The polypeptide is Peptidyl-Lys metalloendopeptidase (MEP) (Grifola frondosa (Maitake)).